Reading from the N-terminus, the 272-residue chain is Phosphatidylglycerol--prolipoprotein diacylglyceryl transferase (272 aa).

A run of 7 helical transmembrane segments spans residues 17-37, 55-75, 90-110, 125-145, 174-194, 202-222, and 230-250; these read LQVH…WGLA, LVFY…VLFY, VWTG…AMLF, FIAP…FIGG, PSQI…LWWF, MAVS…MEFF, and GFIL…MLLI. Residue R138 coordinates a 1,2-diacyl-sn-glycero-3-phospho-(1'-sn-glycerol).

It belongs to the Lgt family.

The protein resides in the cell inner membrane. The enzyme catalyses L-cysteinyl-[prolipoprotein] + a 1,2-diacyl-sn-glycero-3-phospho-(1'-sn-glycerol) = an S-1,2-diacyl-sn-glyceryl-L-cysteinyl-[prolipoprotein] + sn-glycerol 1-phosphate + H(+). The protein operates within protein modification; lipoprotein biosynthesis (diacylglyceryl transfer). Its function is as follows. Catalyzes the transfer of the diacylglyceryl group from phosphatidylglycerol to the sulfhydryl group of the N-terminal cysteine of a prolipoprotein, the first step in the formation of mature lipoproteins. The protein is Phosphatidylglycerol--prolipoprotein diacylglyceryl transferase of Acinetobacter baumannii (strain ACICU).